The primary structure comprises 194 residues: MKIGILALQGAFAEHAKVLDQLGVESVELRNLDDFQQDQSDLSGLILPGGESTTMGKLLRDQNMLLPIREAILSGLPVFGTCAGLILLAKEITSQKESHLGTMDMVVERNAYGRQLGSFYTEAECKGVGKIPMTFIRGPIISSVGEDVEILATVDNQIVAAQEKNMLVTSFHPELTDDAHLHQYFIEMCKEKRQ.

50-52 (GES) is a binding site for L-glutamine. Catalysis depends on cysteine 82, which acts as the Nucleophile. L-glutamine contacts are provided by residues arginine 109 and 136–137 (IR). Residues histidine 172 and glutamate 174 each act as charge relay system in the active site.

It belongs to the glutaminase PdxT/SNO family. In terms of assembly, in the presence of PdxS, forms a dodecamer of heterodimers. Only shows activity in the heterodimer.

The enzyme catalyses aldehydo-D-ribose 5-phosphate + D-glyceraldehyde 3-phosphate + L-glutamine = pyridoxal 5'-phosphate + L-glutamate + phosphate + 3 H2O + H(+). The catalysed reaction is L-glutamine + H2O = L-glutamate + NH4(+). It functions in the pathway cofactor biosynthesis; pyridoxal 5'-phosphate biosynthesis. Functionally, catalyzes the hydrolysis of glutamine to glutamate and ammonia as part of the biosynthesis of pyridoxal 5'-phosphate. The resulting ammonia molecule is channeled to the active site of PdxS. The protein is Pyridoxal 5'-phosphate synthase subunit PdxT of Streptococcus pneumoniae (strain CGSP14).